A 276-amino-acid chain; its full sequence is 3-methyl-2-oxobutanoate hydroxymethyltransferase (276 aa).

Residues Asp-46 and Asp-85 each contribute to the Mg(2+) site. 3-methyl-2-oxobutanoate-binding positions include 46–47 (DS), Asp-85, and Lys-115. A Mg(2+)-binding site is contributed by Glu-117. The active-site Proton acceptor is Glu-184.

Belongs to the PanB family. As to quaternary structure, homodecamer; pentamer of dimers. Mg(2+) is required as a cofactor.

The protein resides in the cytoplasm. The catalysed reaction is 3-methyl-2-oxobutanoate + (6R)-5,10-methylene-5,6,7,8-tetrahydrofolate + H2O = 2-dehydropantoate + (6S)-5,6,7,8-tetrahydrofolate. Its pathway is cofactor biosynthesis; (R)-pantothenate biosynthesis; (R)-pantoate from 3-methyl-2-oxobutanoate: step 1/2. Functionally, catalyzes the reversible reaction in which hydroxymethyl group from 5,10-methylenetetrahydrofolate is transferred onto alpha-ketoisovalerate to form ketopantoate. This Heliobacterium modesticaldum (strain ATCC 51547 / Ice1) protein is 3-methyl-2-oxobutanoate hydroxymethyltransferase.